Reading from the N-terminus, the 247-residue chain is Ribonuclease PH (247 aa).

Phosphate is bound by residues R90 and G128–R130.

The protein belongs to the RNase PH family. As to quaternary structure, homohexameric ring arranged as a trimer of dimers.

It catalyses the reaction tRNA(n+1) + phosphate = tRNA(n) + a ribonucleoside 5'-diphosphate. In terms of biological role, phosphorolytic 3'-5' exoribonuclease that plays an important role in tRNA 3'-end maturation. Removes nucleotide residues following the 3'-CCA terminus of tRNAs; can also add nucleotides to the ends of RNA molecules by using nucleoside diphosphates as substrates, but this may not be physiologically important. Probably plays a role in initiation of 16S rRNA degradation (leading to ribosome degradation) during starvation. The chain is Ribonuclease PH from Synechococcus sp. (strain CC9605).